A 1227-amino-acid chain; its full sequence is Protein transport protein Sec31A (1227 aa).

WD repeat units follow at residues 4 to 47, 64 to 111, 120 to 160, 166 to 206, 209 to 254, 258 to 298, and 301 to 342; these read KEID…EIFE, SSAH…AGDT, KHTG…TPMT, QPLE…PIIK, DHNN…SPLR, SHTR…VLYE, and TNMQ…DGLR. The stretch at 397 to 430 is one WD 8; interaction with SEC13 repeat; it reads SFSFGGKLVTFENAKPQQQPGIDQQPQHHYVYVS. Disordered stretches follow at residues 804-875, 905-1008, and 1040-1075; these read EAIK…YSQA, QPVA…GWND, and ADPQ…LGPY. The segment covering 905 to 924 has biased composition (low complexity); the sequence is QPVAAPASASYPSPASNTNP. A compositionally biased stretch (pro residues) spans 925 to 945; it reads PYLPAAQPVPSPLYPGQPQPS. Residues 995 to 1006 are compositionally biased toward polar residues; the sequence is PASQRTGPQNGW. The span at 1040-1049 shows a compositional bias: low complexity; sequence ADPQAQMQQP. Polar residues predominate over residues 1057 to 1069; that stretch reads PSFQPQQLSTGQQ.

Belongs to the WD repeat SEC31 family. As to quaternary structure, COPII is composed of at least 5 proteins: the SEC23/24 complex, the SEC13/31 complex and SAR1. SEC13 and SEC31 make a 2:2 tetramer that forms the edge element of the COPII outer coat. The tetramer self-assembles in multiple copies to form the complete polyhedral cage. Interacts (via WD 8) with SEC13.

The protein localises to the cytoplasm. The protein resides in the cytoplasmic vesicle. Its subcellular location is the COPII-coated vesicle membrane. It is found in the endoplasmic reticulum membrane. In terms of biological role, component of the coat protein complex II (COPII) which promotes the formation of transport vesicles from the endoplasmic reticulum (ER). The coat has two main functions, the physical deformation of the endoplasmic reticulum membrane into vesicles and the selection of cargo molecules. This Gallus gallus (Chicken) protein is Protein transport protein Sec31A (SEC31A).